The chain runs to 346 residues: MAHRPRWTLSQVTELFEKPLLDLLFEAQQVHRQHFDPRQVQVSTLLSIKTGACPEDCKYCPQSSRYKTGLEAERLMEVEQVLESARKAKAAGSTRFCMGAAWKNPHERDMSYLEQMVQGVKAMGLEACMTLGTLSESQAQRLANAGLDYYNHNLDTSPEFYGNIITTRTYQERLDTLEKVRDAGIKVCSGGIVGLGETVKDRAGLLLQLANLPTPPESVPINMLVKVKGTPLADNDDVDAFDFIRTIAVARIMMPTSYVRLSAGREQMNEQTQAMCFMAGANSIFYGCKLLTTPNPEEDKDLQLFRKLGLNPQQTAVLAGDNEQQQRLEQALMTPDTDEYYNAAAL.

Positions 38 to 256 constitute a Radical SAM core domain; the sequence is RQVQVSTLLS…IAVARIMMPT (219 aa). The [4Fe-4S] cluster site is built by Cys-53, Cys-57, and Cys-60. [2Fe-2S] cluster is bound by residues Cys-97, Cys-128, Cys-188, and Arg-260.

This sequence belongs to the radical SAM superfamily. Biotin synthase family. Homodimer. [4Fe-4S] cluster serves as cofactor. Requires [2Fe-2S] cluster as cofactor.

The catalysed reaction is (4R,5S)-dethiobiotin + (sulfur carrier)-SH + 2 reduced [2Fe-2S]-[ferredoxin] + 2 S-adenosyl-L-methionine = (sulfur carrier)-H + biotin + 2 5'-deoxyadenosine + 2 L-methionine + 2 oxidized [2Fe-2S]-[ferredoxin]. It functions in the pathway cofactor biosynthesis; biotin biosynthesis; biotin from 7,8-diaminononanoate: step 2/2. Its function is as follows. Catalyzes the conversion of dethiobiotin (DTB) to biotin by the insertion of a sulfur atom into dethiobiotin via a radical-based mechanism. This chain is Biotin synthase, found in Escherichia coli O157:H7.